The primary structure comprises 504 residues: Cytochrome P450 4A24 (504 aa).

2 consecutive transmembrane segments (helical) span residues 6–26 and 112–132; these read LASASGLLQVASLLGLLLLLL and VVYRLLIPWIGCGLLLLNGQT. Cys451 serves as a coordination point for heme.

This sequence belongs to the cytochrome P450 family. The cofactor is heme.

The protein resides in the endoplasmic reticulum membrane. It catalyses the reaction an omega-methyl-long-chain fatty acid + reduced [NADPH--hemoprotein reductase] + O2 = an omega-hydroxy-long-chain fatty acid + oxidized [NADPH--hemoprotein reductase] + H2O + H(+). Catalyzes the omega- and (omega-1)-hydroxylation of various fatty acids such as laurate and palmitate. Has no activity toward taurochenodeoxycholic acid. In Sus scrofa (Pig), this protein is Cytochrome P450 4A24 (CYP4A24).